The sequence spans 1061 residues: Error-prone DNA polymerase (1061 aa).

This sequence belongs to the DNA polymerase type-C family. DnaE2 subfamily.

The protein localises to the cytoplasm. It carries out the reaction DNA(n) + a 2'-deoxyribonucleoside 5'-triphosphate = DNA(n+1) + diphosphate. Functionally, DNA polymerase involved in damage-induced mutagenesis and translesion synthesis (TLS). It is not the major replicative DNA polymerase. The chain is Error-prone DNA polymerase from Bdellovibrio bacteriovorus (strain ATCC 15356 / DSM 50701 / NCIMB 9529 / HD100).